A 272-amino-acid polypeptide reads, in one-letter code: Putative phosphatase BU028/BU029 (272 aa).

Aspartate 8 acts as the Nucleophile in catalysis. Residue aspartate 8 coordinates Mg(2+). Leucine 9 is a phosphate binding site. Residue aspartate 10 coordinates Mg(2+). Residues 42 to 43 (SG) and lysine 191 contribute to the phosphate site. Position 214 (aspartate 214) interacts with Mg(2+). Asparagine 217 serves as a coordination point for phosphate.

The protein belongs to the HAD-like hydrolase superfamily. Cof family. It depends on Mg(2+) as a cofactor.

The chain is Putative phosphatase BU028/BU029 from Buchnera aphidicola subsp. Acyrthosiphon pisum (strain APS) (Acyrthosiphon pisum symbiotic bacterium).